The following is a 166-amino-acid chain: Crossover junction endodeoxyribonuclease RuvC (166 aa).

Active-site residues include Asp11, Glu71, and Asp142. Residues Asp11, Glu71, and Asp142 each coordinate Mg(2+).

The protein belongs to the RuvC family. As to quaternary structure, homodimer which binds Holliday junction (HJ) DNA. The HJ becomes 2-fold symmetrical on binding to RuvC with unstacked arms; it has a different conformation from HJ DNA in complex with RuvA. In the full resolvosome a probable DNA-RuvA(4)-RuvB(12)-RuvC(2) complex forms which resolves the HJ. Requires Mg(2+) as cofactor.

The protein localises to the cytoplasm. It catalyses the reaction Endonucleolytic cleavage at a junction such as a reciprocal single-stranded crossover between two homologous DNA duplexes (Holliday junction).. Functionally, the RuvA-RuvB-RuvC complex processes Holliday junction (HJ) DNA during genetic recombination and DNA repair. Endonuclease that resolves HJ intermediates. Cleaves cruciform DNA by making single-stranded nicks across the HJ at symmetrical positions within the homologous arms, yielding a 5'-phosphate and a 3'-hydroxyl group; requires a central core of homology in the junction. The consensus cleavage sequence is 5'-(A/T)TT(C/G)-3'. Cleavage occurs on the 3'-side of the TT dinucleotide at the point of strand exchange. HJ branch migration catalyzed by RuvA-RuvB allows RuvC to scan DNA until it finds its consensus sequence, where it cleaves and resolves the cruciform DNA. In Maricaulis maris (strain MCS10) (Caulobacter maris), this protein is Crossover junction endodeoxyribonuclease RuvC.